The following is a 156-amino-acid chain: Small ribosomal subunit protein uS7 (156 aa).

This sequence belongs to the universal ribosomal protein uS7 family. In terms of assembly, part of the 30S ribosomal subunit. Contacts proteins S9 and S11.

In terms of biological role, one of the primary rRNA binding proteins, it binds directly to 16S rRNA where it nucleates assembly of the head domain of the 30S subunit. Is located at the subunit interface close to the decoding center, probably blocks exit of the E-site tRNA. The sequence is that of Small ribosomal subunit protein uS7 from Leuconostoc mesenteroides subsp. mesenteroides (strain ATCC 8293 / DSM 20343 / BCRC 11652 / CCM 1803 / JCM 6124 / NCDO 523 / NBRC 100496 / NCIMB 8023 / NCTC 12954 / NRRL B-1118 / 37Y).